Consider the following 371-residue polypeptide: Chaperone protein DnaJ (371 aa).

The 66-residue stretch at 5–70 (DYYEVLGVNR…QKRAAYDQYG (66 aa)) folds into the J domain. Positions 31–52 (KYHPDRNPDNPKAEESFKEAKE) are disordered. Residues 32 to 52 (YHPDRNPDNPKAEESFKEAKE) show a composition bias toward basic and acidic residues. Residues 132–210 (RTETKIRIPV…CQGAGRVKKH (79 aa)) form a CR-type zinc finger. Cys145, Cys148, Cys162, Cys165, Cys184, Cys187, Cys198, and Cys201 together coordinate Zn(2+). CXXCXGXG motif repeat units follow at residues 145–152 (CETCHGSG), 162–169 (CTTCGGHG), 184–191 (CPKCHGSG), and 198–205 (CPSCQGAG).

Belongs to the DnaJ family. As to quaternary structure, homodimer. The cofactor is Zn(2+).

It is found in the cytoplasm. Participates actively in the response to hyperosmotic and heat shock by preventing the aggregation of stress-denatured proteins and by disaggregating proteins, also in an autonomous, DnaK-independent fashion. Unfolded proteins bind initially to DnaJ; upon interaction with the DnaJ-bound protein, DnaK hydrolyzes its bound ATP, resulting in the formation of a stable complex. GrpE releases ADP from DnaK; ATP binding to DnaK triggers the release of the substrate protein, thus completing the reaction cycle. Several rounds of ATP-dependent interactions between DnaJ, DnaK and GrpE are required for fully efficient folding. Also involved, together with DnaK and GrpE, in the DNA replication of plasmids through activation of initiation proteins. This is Chaperone protein DnaJ from Methylovorus sp. (strain SS1 / DSM 11726).